Here is a 436-residue protein sequence, read N- to C-terminus: Trigger factor (436 aa).

One can recognise a PPIase FKBP-type domain in the interval 163 to 248 (GDTVVIDFDG…IHEVKEKQLP (86 aa)).

This sequence belongs to the FKBP-type PPIase family. Tig subfamily.

Its subcellular location is the cytoplasm. The catalysed reaction is [protein]-peptidylproline (omega=180) = [protein]-peptidylproline (omega=0). Functionally, involved in protein export. Acts as a chaperone by maintaining the newly synthesized protein in an open conformation. Functions as a peptidyl-prolyl cis-trans isomerase. This is Trigger factor from Levilactobacillus brevis (strain ATCC 367 / BCRC 12310 / CIP 105137 / JCM 1170 / LMG 11437 / NCIMB 947 / NCTC 947) (Lactobacillus brevis).